A 78-amino-acid polypeptide reads, in one-letter code: Small ribosomal subunit protein uS19m (78 aa).

Belongs to the universal ribosomal protein uS19 family.

It is found in the mitochondrion. This is Small ribosomal subunit protein uS19m (RPS19) from Acanthamoeba castellanii (Amoeba).